Reading from the N-terminus, the 424-residue chain is MTTLRIRGGRPLQGTIRVGGRKNATLPLIAATLLADGTSRLENVPQIHDVMVYRKLLTGLGARVDWDPVHGILTVHTGGVRPGEPDYHLASSIRASYYLLGVMLARYGEASVPMPGGDNIGHRPVDQHFKGLSALGAEIWMDRGIIRARARRLRGAHVYLDIISVGATIQVMLAASLAEGTTVIQNCAREPHVVAVANFINACGGKVTGAGTDTIRVRGVDRLVGATQTVIPDDIEAGTWMMAAAMTQGDVTLQNVIPTHITPIMAKLREAGVEVHELGDAVRVVGRERPKAINVKTLPYPGFPTDAQSQMTALLSLAEGTSYITETLYEDRFRFVPELVRMGAQIRVEGRTAIVKGVEQLYGAPVEATDIRAGAALVIAGLAAEGETTIYGMEHVQRGYEKLEQKLLALGADVQMERQGAAVV.

22–23 (KN) provides a ligand contact to phosphoenolpyruvate. Arg-94 is a binding site for UDP-N-acetyl-alpha-D-glucosamine. The active-site Proton donor is the Asp-118. UDP-N-acetyl-alpha-D-glucosamine is bound by residues 123–127 (RPVDQ), Asp-306, and Leu-328.

Belongs to the EPSP synthase family. MurA subfamily.

It is found in the cytoplasm. It catalyses the reaction phosphoenolpyruvate + UDP-N-acetyl-alpha-D-glucosamine = UDP-N-acetyl-3-O-(1-carboxyvinyl)-alpha-D-glucosamine + phosphate. It participates in cell wall biogenesis; peptidoglycan biosynthesis. Its function is as follows. Cell wall formation. Adds enolpyruvyl to UDP-N-acetylglucosamine. The chain is UDP-N-acetylglucosamine 1-carboxyvinyltransferase 3 from Symbiobacterium thermophilum (strain DSM 24528 / JCM 14929 / IAM 14863 / T).